The chain runs to 294 residues: Elongation factor Ts (294 aa).

The interval 80–83 (TDFV) is involved in Mg(2+) ion dislocation from EF-Tu.

The protein belongs to the EF-Ts family.

The protein localises to the cytoplasm. Associates with the EF-Tu.GDP complex and induces the exchange of GDP to GTP. It remains bound to the aminoacyl-tRNA.EF-Tu.GTP complex up to the GTP hydrolysis stage on the ribosome. This Listeria monocytogenes serotype 4b (strain CLIP80459) protein is Elongation factor Ts.